Consider the following 372-residue polypeptide: Innexin-16 (372 aa).

The next 4 helical transmembrane spans lie at 31–51 (VVTT…NYVG), 106–126 (VPFL…FWII), 181–201 (LVMK…LNSF), and 263–283 (IFIF…GDFV). N-linked (GlcNAc...) asparagine glycosylation is present at Asn352.

It belongs to the pannexin family.

The protein resides in the cell membrane. The protein localises to the cell junction. It localises to the gap junction. Its function is as follows. Structural component of the gap junctions. Required for signals downstream of defecation clock. This chain is Innexin-16 (inx-16), found in Caenorhabditis elegans.